The primary structure comprises 799 residues: DISARM protein DrmE (799 aa).

The protein resides in the cytoplasm. Functionally, component of antiviral defense system DISARM (defense island system associated with restriction-modification), composed of DrmE, DrmA, DrmB, DrmC and DrmMII. DISARM is probably a multi-gene restriction module, this subunit has an unknown function. Expression of DISARM in B.subtilis (strain BEST7003) confers resistance to phages Nf, phi29, phi105, phi3T, SPO1, SPR and SPP1. Protection is over 10(7)-fold against phi3T, 10(4)-10(5)-fold against Nf, phi29, phi105 and SPR, 100-fold against SPO1 and 10-fold against SPP1. DISARM does not interfere with phage adsorption, but instead interferes with (phi3T) DNA replication early in its cycle, preventing replication, circularization and lysogeny and probably causes phage DNA degradation (DNA is degraded in SPP1-infected cells). In Bacillus paralicheniformis (strain ATCC 9945a / NCIMB 11709 / CD-2), this protein is DISARM protein DrmE.